The sequence spans 440 residues: Trigger factor (440 aa).

The 86-residue stretch at 163 to 248 folds into the PPIase FKBP-type domain; that stretch reads NDTVSINFKG…INSIKEKVLP (86 aa).

This sequence belongs to the FKBP-type PPIase family. Tig subfamily.

It localises to the cytoplasm. It carries out the reaction [protein]-peptidylproline (omega=180) = [protein]-peptidylproline (omega=0). Functionally, involved in protein export. Acts as a chaperone by maintaining the newly synthesized protein in an open conformation. Functions as a peptidyl-prolyl cis-trans isomerase. In Finegoldia magna (strain ATCC 29328 / DSM 20472 / WAL 2508) (Peptostreptococcus magnus), this protein is Trigger factor.